A 107-amino-acid polypeptide reads, in one-letter code: MVNEIDSESLSQRLADTEDVLLVDIRTPAEIAQGMIPDALQLPMHLIPIRMSEIPKDRDVVIYCRSGARSYQACAYLMQQGYGRVLNLRGGIIAWARHGLPIVAPEG.

One can recognise a Rhodanese domain in the interval 16–104 (DTEDVLLVDI…WARHGLPIVA (89 aa)). The active-site Cysteine persulfide intermediate is Cys64.

As to quaternary structure, monomer.

It localises to the cytoplasm. Its pathway is energy metabolism; sulfur metabolism. In terms of biological role, sulfur carrier protein involved in sulfur trafficking for oxidative dissimilatory sulfur metabolism. Component of a sulfur relay system that starts with the sulfur-mobilizing rhodanese-like protein Rhd_2599 (Alvin_2599), which transfers the sulfur from a low-molecular-weight thiol, maybe glutathione, to the TusA protein (Alvin_2600); TusA serves as the sulfur donor for DsrEFH, which persulfurates DsrC; persulfurated DsrC very probably serves as a direct substrate for reverse-acting sulfite reductase, DsrAB. Is able to catalyze the sulfur transfer reaction from thiosulfate or glutathione (GSSH) to cyanide in vitro, however, thiosulfate is unlikely an in vivo substrate. This Allochromatium vinosum (strain ATCC 17899 / DSM 180 / NBRC 103801 / NCIMB 10441 / D) (Chromatium vinosum) protein is Sulfurtransferase Alvin_2599.